Reading from the N-terminus, the 258-residue chain is UPF0246 protein YaaA (258 aa).

This sequence belongs to the UPF0246 family.

The sequence is that of UPF0246 protein YaaA from Escherichia coli (strain SE11).